The primary structure comprises 141 residues: ATP synthase epsilon chain (141 aa).

Belongs to the ATPase epsilon chain family. F-type ATPases have 2 components, CF(1) - the catalytic core - and CF(0) - the membrane proton channel. CF(1) has five subunits: alpha(3), beta(3), gamma(1), delta(1), epsilon(1). CF(0) has three main subunits: a, b and c.

The protein localises to the cell inner membrane. Its function is as follows. Produces ATP from ADP in the presence of a proton gradient across the membrane. This Burkholderia mallei (strain NCTC 10247) protein is ATP synthase epsilon chain.